Reading from the N-terminus, the 164-residue chain is Probable ribosome biogenesis protein RLP24 (164 aa).

It belongs to the eukaryotic ribosomal protein eL24 family. As to quaternary structure, associated with nucleolar and cytoplasmic pre-60S particles. At the end of biogenesis it dissociates from cytoplasmic pre-60S particles and is likely to be exchanged for its ribosomal homolog, RPL24.

It is found in the cytoplasm. Its subcellular location is the nucleus. In terms of biological role, involved in the biogenesis of the 60S ribosomal subunit. Ensures the docking of nog1 to pre-60S particles. Activates and recruits ATPase AFG2 to cytoplasmic pre-60S ribosomal particles. This is Probable ribosome biogenesis protein RLP24 (rlp24) from Dictyostelium discoideum (Social amoeba).